Here is a 331-residue protein sequence, read N- to C-terminus: Ketol-acid reductoisomerase (NADP(+)) (331 aa).

In terms of domain architecture, KARI N-terminal Rossmann spans 2-182; that stretch reads ARMYYDTDAN…GGTRAGILET (181 aa). Residues 25-28, Ser-51, Ser-53, and 83-86 contribute to the NADP(+) site; these read YGSQ and DEVQ. The active site involves His-108. Gly-134 contacts NADP(+). In terms of domain architecture, KARI C-terminal knotted spans 183–328; that stretch reads TFREETETDL…KDLRAMFSWL (146 aa). Positions 191, 195, 227, and 231 each coordinate Mg(2+). Ser-252 is a substrate binding site.

It belongs to the ketol-acid reductoisomerase family. Requires Mg(2+) as cofactor.

The catalysed reaction is (2R)-2,3-dihydroxy-3-methylbutanoate + NADP(+) = (2S)-2-acetolactate + NADPH + H(+). It catalyses the reaction (2R,3R)-2,3-dihydroxy-3-methylpentanoate + NADP(+) = (S)-2-ethyl-2-hydroxy-3-oxobutanoate + NADPH + H(+). Its pathway is amino-acid biosynthesis; L-isoleucine biosynthesis; L-isoleucine from 2-oxobutanoate: step 2/4. It participates in amino-acid biosynthesis; L-valine biosynthesis; L-valine from pyruvate: step 2/4. Its function is as follows. Involved in the biosynthesis of branched-chain amino acids (BCAA). Catalyzes an alkyl-migration followed by a ketol-acid reduction of (S)-2-acetolactate (S2AL) to yield (R)-2,3-dihydroxy-isovalerate. In the isomerase reaction, S2AL is rearranged via a Mg-dependent methyl migration to produce 3-hydroxy-3-methyl-2-ketobutyrate (HMKB). In the reductase reaction, this 2-ketoacid undergoes a metal-dependent reduction by NADPH to yield (R)-2,3-dihydroxy-isovalerate. This chain is Ketol-acid reductoisomerase (NADP(+)), found in Rippkaea orientalis (strain PCC 8801 / RF-1) (Cyanothece sp. (strain PCC 8801)).